The chain runs to 89 residues: Small ribosomal subunit protein uS15 (89 aa).

This sequence belongs to the universal ribosomal protein uS15 family. In terms of assembly, part of the 30S ribosomal subunit. Forms a bridge to the 50S subunit in the 70S ribosome, contacting the 23S rRNA.

One of the primary rRNA binding proteins, it binds directly to 16S rRNA where it helps nucleate assembly of the platform of the 30S subunit by binding and bridging several RNA helices of the 16S rRNA. Functionally, forms an intersubunit bridge (bridge B4) with the 23S rRNA of the 50S subunit in the ribosome. The chain is Small ribosomal subunit protein uS15 from Escherichia coli O139:H28 (strain E24377A / ETEC).